Consider the following 100-residue polypeptide: NADH-quinone oxidoreductase subunit K (100 aa).

Transmembrane regions (helical) follow at residues 4–24, 28–48, and 60–80; these read LQHG…GLVI, LLFM…AFVV, and VMYI…LALL.

The protein belongs to the complex I subunit 4L family. In terms of assembly, NDH-1 is composed of 13 different subunits. Subunits NuoA, H, J, K, L, M, N constitute the membrane sector of the complex.

It is found in the cell inner membrane. The enzyme catalyses a quinone + NADH + 5 H(+)(in) = a quinol + NAD(+) + 4 H(+)(out). Functionally, NDH-1 shuttles electrons from NADH, via FMN and iron-sulfur (Fe-S) centers, to quinones in the respiratory chain. The immediate electron acceptor for the enzyme in this species is believed to be ubiquinone. Couples the redox reaction to proton translocation (for every two electrons transferred, four hydrogen ions are translocated across the cytoplasmic membrane), and thus conserves the redox energy in a proton gradient. The protein is NADH-quinone oxidoreductase subunit K of Shigella boydii serotype 18 (strain CDC 3083-94 / BS512).